The sequence spans 236 residues: GTP cyclohydrolase 1 (236 aa).

Residues 1–52 are disordered; it reads MAAARSCNGYARREGPPSPKLGTEKPRVSAGSGGSGDGWRGERPRSEEDNEL. Residues C127, H130, and C198 each coordinate Zn(2+).

Belongs to the GTP cyclohydrolase I family. Toroid-shaped homodecamer, composed of two pentamers of five dimers.

The protein localises to the cytoplasm. It localises to the nucleus. It carries out the reaction GTP + H2O = 7,8-dihydroneopterin 3'-triphosphate + formate + H(+). Its pathway is cofactor biosynthesis; 7,8-dihydroneopterin triphosphate biosynthesis; 7,8-dihydroneopterin triphosphate from GTP: step 1/1. GTP shows a positive allosteric effect, and tetrahydrobiopterin inhibits the enzyme activity. Zinc is required for catalytic activity. Inhibited by Mg(2+). Its function is as follows. May positively regulate nitric oxide synthesis in endothelial cells. May be involved in dopamine synthesis. May modify pain sensitivity and persistence. This Gallus gallus (Chicken) protein is GTP cyclohydrolase 1 (GCH1).